A 501-amino-acid chain; its full sequence is Probable cytosol aminopeptidase (501 aa).

2 residues coordinate Mn(2+): Lys-268 and Asp-273. Residue Lys-280 is part of the active site. Mn(2+) contacts are provided by Asp-291, Asp-350, and Glu-352. Arg-354 is an active-site residue.

The protein belongs to the peptidase M17 family. Mn(2+) is required as a cofactor.

It localises to the cytoplasm. The catalysed reaction is Release of an N-terminal amino acid, Xaa-|-Yaa-, in which Xaa is preferably Leu, but may be other amino acids including Pro although not Arg or Lys, and Yaa may be Pro. Amino acid amides and methyl esters are also readily hydrolyzed, but rates on arylamides are exceedingly low.. It catalyses the reaction Release of an N-terminal amino acid, preferentially leucine, but not glutamic or aspartic acids.. In terms of biological role, presumably involved in the processing and regular turnover of intracellular proteins. Catalyzes the removal of unsubstituted N-terminal amino acids from various peptides. The sequence is that of Probable cytosol aminopeptidase from Pseudoalteromonas atlantica (strain T6c / ATCC BAA-1087).